We begin with the raw amino-acid sequence, 423 residues long: Maltoporin 1 (423 aa).

An N-terminal signal peptide occupies residues 1–23; sequence MNTTLRALSVALAAALIAPSAFA.

It belongs to the porin LamB (TC 1.B.3) family. Homotrimer formed of three 18-stranded antiparallel beta-barrels, containing three independent channels.

The protein resides in the cell outer membrane. The enzyme catalyses beta-maltose(in) = beta-maltose(out). Involved in the transport of maltose and maltodextrins. The chain is Maltoporin 1 from Klebsiella pneumoniae subsp. pneumoniae (strain ATCC 700721 / MGH 78578).